Here is a 1262-residue protein sequence, read N- to C-terminus: MMSFVQKVSLFILAVFQPSVILAQQDALGGCTHLGQEYADRDVWKPEPCQICVCDSGSVLCDDIICDDQELDCPNPEIPLGECCPVCPQTTPQPTELPYTQGPKGDPGSPGSPGRTGAPGPPGQPGSPGAPGPPGICQSCPSISGGSFSPQYDSYDVKAGSVGMGYPPQPISGFPGPPGPSGPPGPPGHAGPPGSNGYQGPPGEPGQPGPSGPPGPAGMIGPAGPPGKDGEPGRPGRNGDRGIPGLPGHKGHPGMPGMPGMKGARGFDGKDGAKGDSGAPGPKGEAGQPGANGSPGQPGPGGPTGERGRPGNPGGPGAHGKDGAPGTAGPLGPPGPPGTAGFPGSPGFKGEAGPPGPAGASGNPGERGEPGPQGQAGPPGPQGPPGRAGSPGGKGEMGPSGIPGGPGPPGGRGLPGPPGTSGNPGAKGTPGEPGKNGAKGDPGPKGERGENGTPGARGPPGEEGKRGANGEPGQNGVPGTPGERGSPGFRGLPGSNGLPGEKGPAGERGSPGPPGPSGPAGDRGQDGGPGLPGMRGLPGIPGSPGSDGKPGPPGNQGEPGRSGPPGPAGPRGQPGVMGFPGPKGNEGAPGKNGERGPGGPPGTPGPAGKNGDVGLPGPPGPAGPAGDRGEPGPSGSPGLQGLPGGPGPAGENGKPGEPGPKGDIGGPGFPGPKGENGIPGERGPQGPPGPTGARGGPGPAGSEGAKGPPGPPGAPGGTGLPGLQGMPGERGASGSPGPKGDKGEPGGKGADGLPGARGERGNVGPIGPPGPAGPPGDKGETGPAGAPGPAGSRGGPGERGEQGLPGPAGFPGAPGQNGEPGGKGERGPPGLRGEAGPPGAAGPQGGPGAPGPPGPQGVKGERGSPGGPGAAGFPGARGPPGPPGNNGDRGESGPPGVPGPPGHPGPAGNNGAPGKAGERGFQGPLGPQGAIGSPGASGARGPPGPAGPPGKDGRGGYPGPIGPPGPRGNRGESGPAGPPGQPGLPGPSGPPGPCCGGGVASLGAGEKGPVGYGYEYRDEPKENEINLGEIMSSMKSINNQIENILSPDGSRKNPARNCRDLKFCHPELKSGEYWIDPNQGCKMDAIKVYCNMETGETCLSANPATVPRKNWWTTESSGKKHVWFGESMKGGFQFSYGDPDLPEDVSEVQLAFLRILSSRASQNITYHCKNSIAYMNQASGNVKKALKLMSSVETDIKAEGNSKYMYAVLEDGCTKHTGEWGKTVFEYRTRKTMRLPVVDIAPIDIGGPDQEFGVDVGPVCFL.

A signal peptide spans 1-23 (MMSFVQKVSLFILAVFQPSVILA). A propeptide spans 24–150 (QQDALGGCTH…PSISGGSFSP (127 aa)) (N-terminal propeptide). Residues 29–88 (GGCTHLGQEYADRDVWKPEPCQICVCDSGSVLCDDIICDDQELDCPNPEIPLGECCPVCP) enclose the VWFC domain. Disordered regions lie at residues 95 to 143 (TELP…CPSI) and 160 to 1000 (GSVG…GGVA). A compositionally biased stretch (low complexity) spans 102–118 (GPKGDPGSPGSPGRTGA). The segment covering 119–134 (PGPPGQPGSPGAPGPP) has biased composition (pro residues). Positions 145-164 (GGSFSPQYDSYDVKAGSVGM) are nonhelical region (N-terminal). The segment at 165-994 (GYPPQPISGF…PGPSGPPGPC (830 aa)) is triple-helical region. A compositionally biased stretch (pro residues) spans 167-190 (PPQPISGFPGPPGPSGPPGPPGHA). A compositionally biased stretch (low complexity) spans 192 to 201 (PPGSNGYQGP). A compositionally biased stretch (pro residues) spans 202 to 216 (PGEPGQPGPSGPPGP). Over residues 228 to 240 (KDGEPGRPGRNGD) the composition is skewed to basic and acidic residues. Residues 253-264 (PGMPGMPGMKGA) are compositionally biased toward low complexity. At K262 the chain carries 5-hydroxylysine. The segment covering 265-274 (RGFDGKDGAK) has biased composition (basic and acidic residues). Low complexity-rich tracts occupy residues 276–295 (DSGA…NGSP) and 339–376 (TAGF…QGQA). A 5-hydroxylysine modification is found at K283. The span at 389–414 (GSPGGKGEMGPSGIPGGPGPPGGRGL) shows a compositional bias: gly residues. 2 stretches are compositionally biased toward low complexity: residues 534–549 (MRGL…SDGK) and 631–640 (PGPSGSPGLQ). The span at 641 to 650 (GLPGGPGPAG) shows a compositional bias: gly residues. Positions 672–684 (PKGENGIPGERGP) are enriched in low complexity. Gly residues predominate over residues 692–701 (GARGGPGPAG). 4 stretches are compositionally biased toward low complexity: residues 723–738 (LQGM…SPGP), 781–790 (TGPAGAPGPA), 802–817 (QGLP…PGQN), and 828–838 (PPGLRGEAGPP). K859 is modified (5-hydroxylysine). Gly residues predominate over residues 863 to 872 (GSPGGPGAAG). Positions 895–904 (PGVPGPPGHP) are enriched in pro residues. Residues 927 to 940 (PQGAIGSPGASGAR) are compositionally biased toward low complexity. Residues 976 to 993 (AGPPGQPGLPGPSGPPGP) show a composition bias toward pro residues. The tract at residues 995–1003 (CGGGVASLG) is nonhelical region (C-terminal). A propeptide spans 1018 to 1262 (DEPKENEINL…GVDVGPVCFL (245 aa)) (C-terminal propeptide). Residues 1028 to 1262 (GEIMSSMKSI…GVDVGPVCFL (235 aa)) form the Fibrillar collagen NC1 domain. Intrachain disulfides connect C1058–C1090, C1098–C1260, and C1168–C1213. Residues D1076, N1078, Q1079, C1081, and D1084 each coordinate Ca(2+). N-linked (GlcNAc...) asparagine glycosylation is present at N1163.

It belongs to the fibrillar collagen family. In terms of assembly, trimers of identical alpha 1(III) chains. The chains are linked to each other by interchain disulfide bonds. Trimers are also cross-linked via hydroxylysines. In terms of processing, prolines at the third position of the tripeptide repeating unit (G-X-Y) are hydroxylated in some or all of the chains.

The protein localises to the secreted. Its subcellular location is the extracellular space. The protein resides in the extracellular matrix. Its function is as follows. Collagen type III occurs in most soft connective tissues along with type I collagen. This chain is Collagen alpha-1(III) chain (COL3A1), found in Gallus gallus (Chicken).